A 746-amino-acid polypeptide reads, in one-letter code: WD repeat-containing protein 91 (746 aa).

Positions 183–215 form a coiled coil; that stretch reads QRTNQVQEENEVLRQKLFALQAEIHRLKKEEQQ. The residue at position 256 (Ser256) is a Phosphoserine. Residues 265–278 show a composition bias toward low complexity; it reads LLPQSKKSPSRLSP. The interval 265–336 is disordered; that stretch reads LLPQSKKSPS…QHRQRRLQDH (72 aa). Residues 282 to 299 are compositionally biased toward polar residues; it reads PPQTQSSAKKESFGSQTT. Residues Ser288 and Ser293 each carry the phosphoserine modification. WD repeat units follow at residues 405–444, 447–487, 514–554, 559–598, 601–640, 663–701, and 708–746; these read EHHSSIMHCRVDCSGRRVASLDVDGVIKVWSFNPIMQTKA, ISKS…NLCE, AASS…QQLQ, PEPIAINCTAFNHNGNLLVTGAADGVIRLFDMQQHECAMS, AHCGEVYSVEFSYDENTVYSIGEDGKFIQWNIHKSGLKVS, VQVPRGRLFAFDSEGNYMLTCSATGGVIYKLGGDDKVLE, and GHRAPVVTVDWSTAMDCGTCLTASMDGKIKLTTLLAHKV.

Belongs to the WD repeat WDR91 family. In terms of assembly, interacts with WDR81; involved in early to late endosome cargo transport. Interacts with BECN1; negatively regulates the PI3 kinase/PI3K activity associated with endosomal membranes.

The protein resides in the early endosome membrane. It localises to the late endosome membrane. Functionally, functions as a negative regulator of the PI3 kinase/PI3K activity associated with endosomal membranes via BECN1, a core subunit of the PI3K complex. By modifying the phosphatidylinositol 3-phosphate/PtdInsP3 content of endosomal membranes may regulate endosome fusion, recycling, sorting and early to late endosome transport. It is for instance, required for the delivery of cargos like BST2/tetherin from early to late endosome and thereby participates indirectly to their degradation by the lysosome. May play a role in meiosis. The polypeptide is WD repeat-containing protein 91 (Bos taurus (Bovine)).